We begin with the raw amino-acid sequence, 1102 residues long: Voltage-gated delayed rectifier potassium channel KCNH8 (1102 aa).

The Cytoplasmic portion of the chain corresponds to 1–225 (MPVMKGLLAP…HFSTFKAGWD (225 aa)). One can recognise a PAS domain in the interval 18-90 (IATRFDGTHS…LQIEKSLEEK (73 aa)). The region spanning 93-145 (FKGEIMFYKKNGAPFWCLLDIVPIKNEKGDVVLFLASFKDITDTKVKITSEDK) is the PAC domain. A helical membrane pass occupies residues 226–246 (WLILLATFYVAVTVPYNVCFI). Residues 247–255 (GNEDLSTTR) lie on the Extracellular side of the membrane. The helical transmembrane segment at 256-276 (STTVSDIAVEILFIIDIILNF) threads the bilayer. The Cytoplasmic segment spans residues 277–298 (RTTYVSKSGQVIFEARSICIHY). A helical membrane pass occupies residues 299 to 319 (VTTWFIIDLIAALPFDLLYAF). N-linked (GlcNAc...) asparagine glycosylation is present at Asn320. Residues 320–327 (NVTVVSLV) are Extracellular-facing. The helical; Voltage-sensor transmembrane segment at 328-348 (HLLKTVRLLRLLRLLQKLDRY) threads the bilayer. The Cytoplasmic portion of the chain corresponds to 349–353 (SQHST). A helical transmembrane segment spans residues 354 to 374 (IVLTLLMSMFALLAHWMACIW). Residues 375-419 (YVIGKMEREDNSLLKWEVGWLHELGKRLESPYYGNNTLGGPSIRS) are Extracellular-facing. A glycan (N-linked (GlcNAc...) asparagine) is linked at Asn409. An intramembrane region (pore-forming) is located at residues 420–440 (AYIAALYFTLSSLTSVGFGNV). A Selectivity filter motif is present at residues 434-439 (SVGFGN). The Extracellular portion of the chain corresponds to 441–448 (SANTDAEK). Residues 449–469 (IFSICTMLIGALMHALVFGNV) traverse the membrane as a helical segment. Residues 470 to 1102 (TAIIQRMYSR…DVKDSKAINV (633 aa)) are Cytoplasmic-facing. Residues 551–668 (LFECASRGCL…HKFVEDIQHD (118 aa)) are cNMP-binding domain. Disordered regions lie at residues 683–744 (SRLS…KTGS), 762–793 (PFHSPIRVSSANSPKTKQEADPPNHGTRKEKN), 818–845 (EDGNSSEETQTFDFGSEQIRPEPRISPS), and 960–983 (LVGSNPQRTEAHEQSPVDSELHHS). Acidic residues predominate over residues 710–723 (VEDEEEEEVEEEET). Over residues 777–793 (TKQEADPPNHGTRKEKN) the composition is skewed to basic and acidic residues. Residues 968–982 (TEAHEQSPVDSELHH) show a composition bias toward basic and acidic residues.

The protein belongs to the potassium channel family. H (Eag) (TC 1.A.1.20) subfamily. Kv12.1/KCNH8 sub-subfamily. The potassium channel is probably composed of a homo- or heterotetrameric complex of pore-forming alpha subunits that can associate with modulating beta subunits. In terms of tissue distribution, detected in superior cervical, mesenteric and coeliac ganglia. Expressed in brain (piriform cortex, olfactory tubercle, cerebral cortex, hippocampus pyramidial cells and dentate gyrus and basal ganglia of caudate/putamen and accumbens nucleus). Expressed in pituitary.

Its subcellular location is the membrane. The catalysed reaction is K(+)(in) = K(+)(out). Pore-forming (alpha) subunit of a voltage-gated delayed rectifier potassium channel that mediates outward-rectifying potassium currents. Elicits a slowly activating, non-inactivating and slowly deactivation outwards potassium current at depolarizating voltages from -30 mV to +50mV. Shows no obvious change in the activation rate from different holding potentials. Activation is strongly dependent on the pH of the external solution. The chain is Voltage-gated delayed rectifier potassium channel KCNH8 from Rattus norvegicus (Rat).